We begin with the raw amino-acid sequence, 443 residues long: GPI mannosyltransferase 1 (443 aa).

A run of 11 helical transmembrane segments spans residues 8 to 28 (PFMV…YGAW), 68 to 88 (PLLA…FSFG), 90 to 110 (ALFA…LTLT), 136 to 156 (TRGS…WAVL), 160 to 180 (IYLG…PFIY), 232 to 252 (LTLI…LHYG), 273 to 291 (FSPY…AGAV), 302 to 322 (FESL…PLVL), 347 to 367 (SQYF…SSLL), 374 to 394 (IAVA…GYLL), and 406 to 426 (LFLA…VIVA).

This sequence belongs to the PIGM family.

Its subcellular location is the endoplasmic reticulum membrane. It functions in the pathway glycolipid biosynthesis; glycosylphosphatidylinositol-anchor biosynthesis. Its function is as follows. Mannosyltransferase involved in glycosylphosphatidylinositol-anchor biosynthesis. Transfers the first alpha-1,4-mannose to GlcN-acyl-PI during GPI precursor assembly. Required for cell wall integrity. The sequence is that of GPI mannosyltransferase 1 (gpi14) from Emericella nidulans (strain FGSC A4 / ATCC 38163 / CBS 112.46 / NRRL 194 / M139) (Aspergillus nidulans).